A 199-amino-acid polypeptide reads, in one-letter code: VAMP-like protein YKT62 (199 aa).

Positions 7-131 (LVLKCDPETR…PYLKEASDKF (125 aa)) constitute a Longin domain. The 61-residue stretch at 139 to 199 (KLLKIQRELD…KKTNSCCTLL (61 aa)) folds into the v-SNARE coiled-coil homology domain. A lipid anchor (S-palmitoyl cysteine) is attached at Cys195. Position 196 is a cysteine methyl ester (Cys196). Residue Cys196 is the site of S-geranylgeranyl cysteine attachment. Residues 197–199 (TLL) constitute a propeptide, removed in mature form.

It belongs to the synaptobrevin family. As to quaternary structure, interacts with SYP41. Core constituent of the SNARE complex required for membrane fusion at the trans-Golgi network.

Its subcellular location is the cell membrane. Functionally, involved in the secretory pathway. Essential for membrane fusion mediated by either SYP41 or SYP61; triggers the fusion of phospholipid vesicles containing SYP41 or SYP61 and VTI12. In Arabidopsis thaliana (Mouse-ear cress), this protein is VAMP-like protein YKT62.